The sequence spans 669 residues: DNA helicase/primase complex-associated protein (669 aa).

The disordered stretch occupies residues 502 to 526; sequence RSTAGTGGEPNPRHITGPDTEGNGE.

This sequence belongs to the herpesviridae HEPA family. In terms of assembly, associates with the primase and the helicase to form the helicase-primase complex. Interacts with the origin-binding protein. Interacts with the polymerase catalytic subunit.

The protein resides in the host nucleus. Component of the helicase/primase complex. Unwinds the DNA at the replication forks and generates single-stranded DNA for both leading and lagging strand synthesis. The primase synthesizes short RNA primers on the lagging strand that the polymerase presumably elongates using dNTPs. The primase-associated factor has no known catalytic activity in the complex and may serve to facilitate the formation of the replisome by directly interacting with the origin-binding protein and the polymerase. The polypeptide is DNA helicase/primase complex-associated protein (ORF40) (Human herpesvirus 8 type P (isolate GK18) (HHV-8)).